Reading from the N-terminus, the 698-residue chain is Vertnin (698 aa).

This sequence belongs to the vertnin family.

It localises to the nucleus. Functionally, acts as a transcription factor that regulates development of thoracic vertebrae. The sequence is that of Vertnin (VRTN) from Sus scrofa (Pig).